Consider the following 945-residue polypeptide: Xylanolytic transcriptional activator xlnR (945 aa).

The span at 1–23 (MSTPSIPQFTSSFSPFSSGSHST) shows a compositional bias: low complexity. Disordered stretches follow at residues 1 to 32 (MSTP…QTVG) and 53 to 118 (AAGT…APVR). Basic and acidic residues predominate over residues 73-84 (HTKDQPPFDNEK). The segment at residues 125-151 (CDQCNQLRTKCDGQHPCAHCIEFGLTC) is a DNA-binding region (zn(2)-C6 fungal-type). Disordered regions lie at residues 172 to 210 (AAAA…GTYD) and 559 to 601 (PPNV…INVT). A compositionally biased stretch (polar residues) spans 176–188 (TQGSNGHSGQANA). Over residues 565–581 (ARQDGERDGDGEADKRH) the composition is skewed to basic and acidic residues.

The protein belongs to the xlnR/xlr1 family.

The protein resides in the nucleus. Functionally, transcriptional activator of the xylanolytic system. Involved in the regulation of extracellular cellulolytic and xylanolytic genes and in the regulation of the intracellular activities of D-xylose catabolic genes in the pentose catabolic pathway (PCP) in response to the presence of D-xylose. Binds to the DNA sequence 5'-GGNTAAA-3'. In Aspergillus niger, this protein is Xylanolytic transcriptional activator xlnR (xlnR).